The sequence spans 207 residues: uncharacterized protein (207 aa).

The signal sequence occupies residues 1-19; the sequence is MRFNVSFLLSLLLPTLAFA.

The protein to P.multocida PM1509.

This is an uncharacterized protein from Pasteurella multocida (strain Pm70).